Reading from the N-terminus, the 246-residue chain is tRNA pseudouridine synthase A (246 aa).

Aspartate 53 functions as the Nucleophile in the catalytic mechanism. Tyrosine 111 contacts substrate.

It belongs to the tRNA pseudouridine synthase TruA family. As to quaternary structure, homodimer.

It catalyses the reaction uridine(38/39/40) in tRNA = pseudouridine(38/39/40) in tRNA. Functionally, formation of pseudouridine at positions 38, 39 and 40 in the anticodon stem and loop of transfer RNAs. This Lysinibacillus sphaericus (strain C3-41) protein is tRNA pseudouridine synthase A.